The sequence spans 370 residues: tRNA-specific 2-thiouridylase MnmA (370 aa).

ATP contacts are provided by residues 7 to 14 and methionine 34; that span reads ALSGGVDS. Residues 104–106 form an interaction with target base in tRNA region; that stretch reads NPD. The Nucleophile role is filled by cysteine 109. Cysteine 109 and cysteine 202 are joined by a disulfide. Position 134 (glycine 134) interacts with ATP. Residues 152-154 form an interaction with tRNA region; it reads KDQ. Cysteine 202 acts as the Cysteine persulfide intermediate in catalysis. The segment at 308–309 is interaction with tRNA; the sequence is RY.

It belongs to the MnmA/TRMU family.

The protein localises to the cytoplasm. The enzyme catalyses S-sulfanyl-L-cysteinyl-[protein] + uridine(34) in tRNA + AH2 + ATP = 2-thiouridine(34) in tRNA + L-cysteinyl-[protein] + A + AMP + diphosphate + H(+). In terms of biological role, catalyzes the 2-thiolation of uridine at the wobble position (U34) of tRNA, leading to the formation of s(2)U34. In Mycoplasma mobile (strain ATCC 43663 / 163K / NCTC 11711) (Mesomycoplasma mobile), this protein is tRNA-specific 2-thiouridylase MnmA.